The following is a 337-amino-acid chain: Mitochondrial uncoupling protein 6 (337 aa).

Solcar repeat units lie at residues 4–136 (KPFL…LKRR), 145–236 (FPLV…VKEI), and 246–331 (GGIG…VRGL). The next 6 helical transmembrane spans lie at 6–26 (FLEGGIAAIIAGALTHPLDLI), 105–125 (PAALFSGVSATILRQMLYSAT), 151–171 (ITAGLIAGAVGSVVGNPADVA), 210–230 (RGSWLTVNRAMIVTASQLATY), 252–272 (VAASFAAGIVAAVASNPIDVV), and 304–324 (YKGLVPTATRQGPFTMILFLT).

This sequence belongs to the mitochondrial carrier (TC 2.A.29) family.

The protein resides in the mitochondrion inner membrane. In terms of biological role, PUMPS are mitochondrial transporter proteins that create proton leaks across the inner mitochondrial membrane, thus uncoupling oxidative phosphorylation. This leads to a decrease in the efficiency of oxidative phosphorylation and an increase in heat production. May be involved in protecting plant cells against oxidative stress damage. Recombinant PUMP6, reconstituted into liposomes, transports a wide range of dicarboxylic acids including malate, oxaloacetate and succinate as well as phosphate, sulfate and thiosulfate. However, it is unknown if these transports are of any biological significance in vivo. In Arabidopsis thaliana (Mouse-ear cress), this protein is Mitochondrial uncoupling protein 6 (PUMP6).